The sequence spans 217 residues: MTHIQPKIKICGITRLEDALAATFAGADALGFNFSHTSARYIAPNNAAAIIKQLPPFVQTVGIFVEQSPSEINAIAQTCNLHYAQLHNDLYGVKEALAITTLPVIKVFRPNENFDVQEVKAFIGESHVTTYLFDAYRPDAHGGTGERIEATLAERIFQAMGNECYAILAGGLTPNNVAEAIRRIRPYGVDTASGVEKAPGIKDVAKMRAFVTAAQNA.

It belongs to the TrpF family.

It carries out the reaction N-(5-phospho-beta-D-ribosyl)anthranilate = 1-(2-carboxyphenylamino)-1-deoxy-D-ribulose 5-phosphate. The protein operates within amino-acid biosynthesis; L-tryptophan biosynthesis; L-tryptophan from chorismate: step 3/5. In Chlorobium chlorochromatii (strain CaD3), this protein is N-(5'-phosphoribosyl)anthranilate isomerase.